We begin with the raw amino-acid sequence, 496 residues long: Serine/threonine-protein kinase Sgk3 (496 aa).

Residues 12-124 (SCPSVSIPSS…AFLQMDSPRH (113 aa)) enclose the PX domain. The interval 121-157 (SPRHQSDPSEDEDERSTSKPHSTSRNINLGPTGNPHA) is disordered. Phosphoserine is present on residues Ser-126 and Ser-129. Over residues 139–151 (KPHSTSRNINLGP) the composition is skewed to polar residues. The region spanning 162 to 419 (FDFLKVIGKG…FLEIQNHPFF (258 aa)) is the Protein kinase domain. ATP-binding positions include 168–176 (IGKGSFGKV) and Lys-191. The Nuclear localization signal motif lies at 195-205 (KKIVLNRKEQK). Asp-286 serves as the catalytic Proton acceptor. Thr-320 bears the Phosphothreonine; by PDPK1 mark. Positions 420 to 496 (ESLSWTDLVQ…YAPPSEDLFL (77 aa)) constitute an AGC-kinase C-terminal domain. At Ser-486 the chain carries Phosphoserine.

It belongs to the protein kinase superfamily. AGC Ser/Thr protein kinase family. As to quaternary structure, interacts with GSK3B and FLII. Interacts with PDPK1 in a phosphorylation-dependent manner. In terms of processing, activated by phosphorylation on Ser-486 by an unknown kinase (may be mTORC2 but not confirmed), transforming it into a substrate for PDPK1 which then phosphorylates it on Thr-320. In terms of tissue distribution, widely expressed, predominantly in the heart, spleen and 7-day embryo.

Its subcellular location is the cytoplasmic vesicle. It localises to the early endosome. The protein resides in the recycling endosome. It catalyses the reaction L-seryl-[protein] + ATP = O-phospho-L-seryl-[protein] + ADP + H(+). It carries out the reaction L-threonyl-[protein] + ATP = O-phospho-L-threonyl-[protein] + ADP + H(+). With respect to regulation, two specific sites, one in the kinase domain (Thr-320) and the other in the C-terminal regulatory region (Ser-486), need to be phosphorylated for its full activation. Serine/threonine-protein kinase which is involved in the regulation of a wide variety of ion channels, membrane transporters, cell growth, proliferation, survival and migration. Up-regulates Na(+) channels: SCNN1A/ENAC and SCN5A, K(+) channels: KCNA3/KV1.3, KCNE1, KCNQ1 and KCNH2/HERG, epithelial Ca(2+) channels: TRPV5 and TRPV6, chloride channel: BSND, creatine transporter: SLC6A8, Na(+)/dicarboxylate cotransporter: SLC13A2/NADC1, Na(+)-dependent phosphate cotransporter: SLC34A2/NAPI-2B, amino acid transporters: SLC1A5/ASCT2 and SLC6A19, glutamate transporters: SLC1A3/EAAT1, SLC1A6/EAAT4 and SLC1A7/EAAT5, glutamate receptors: GRIA1/GLUR1 and GRIK2/GLUR6, Na(+)/H(+) exchanger: SLC9A3/NHE3, and the Na(+)/K(+) ATPase. Plays a role in the regulation of renal tubular phosphate transport and bone density. Phosphorylates NEDD4L and GSK3B. Positively regulates ER transcription activity through phosphorylation of FLII. Negatively regulates the function of ITCH/AIP4 via its phosphorylation and thereby prevents CXCR4 from being efficiently sorted to lysosomes. This is Serine/threonine-protein kinase Sgk3 (Sgk3) from Mus musculus (Mouse).